The following is a 1268-amino-acid chain: Protein transport protein Sec24B (1268 aa).

2 stretches are compositionally biased toward low complexity: residues 1–14 (MSAP…AASA) and 21–48 (GGAA…GPAQ). Disordered regions lie at residues 1-71 (MSAP…SGHY), 216-263 (APTV…LTWS), 303-345 (QNVQ…SVTQ), and 362-451 (NNQA…VVPQ). Serine 2 is subject to N-acetylserine. Phosphoserine is present on serine 55. Residues 225–234 (NSFSGQNTAI) show a composition bias toward polar residues. Composition is skewed to low complexity over residues 245–255 (SQQHHQQQSLS), 311–332 (SPVV…TPPT), and 365–375 (ASSAPTPLSST). At threonine 329 the chain carries Phosphothreonine. The span at 376 to 389 (SDDEEEEEEDEEAG) shows a compositional bias: acidic residues. A compositionally biased stretch (pro residues) spans 426–450 (APDPAPEPDPASAPAPASAPAPVVP). Zn(2+) is bound by residues cysteine 605, cysteine 608, cysteine 626, and cysteine 629. The interval 605–629 (CRSCRTYINPFVSFIDQRRWKCNLC) is zinc finger-like. A Gelsolin-like repeat occupies 1141 to 1213 (PQPPLQKLSA…TLSSERARSF (73 aa)). A Phosphoserine modification is found at serine 1224.

The protein belongs to the SEC23/SEC24 family. SEC24 subfamily. As to quaternary structure, COPII is composed of at least five proteins: the Sec23/24 complex, the Sec13/31 complex and SAR1. Interacts with STING1; promoting STING1 translocation to COPII vesicles in a STEEP1-dependent manner. Interacts with RNF139. Interacts with TMED2 and TMED10. Interacts with CNIH4.

The protein resides in the cytoplasmic vesicle. It localises to the COPII-coated vesicle membrane. It is found in the endoplasmic reticulum membrane. The protein localises to the cytoplasm. Its subcellular location is the cytosol. Component of the coat protein complex II (COPII) which promotes the formation of transport vesicles from the endoplasmic reticulum (ER). The coat has two main functions, the physical deformation of the endoplasmic reticulum membrane into vesicles and the selection of cargo molecules for their transport to the Golgi complex. Plays a central role in cargo selection within the COPII complex and together with SEC24A may have a different specificity compared to SEC24C and SEC24D. May package preferentially cargos with cytoplasmic DxE or LxxLE motifs and may also recognize conformational epitopes. The polypeptide is Protein transport protein Sec24B (Homo sapiens (Human)).